Reading from the N-terminus, the 142-residue chain is Large ribosomal subunit protein uL13 (142 aa).

The protein belongs to the universal ribosomal protein uL13 family. As to quaternary structure, part of the 50S ribosomal subunit.

This protein is one of the early assembly proteins of the 50S ribosomal subunit, although it is not seen to bind rRNA by itself. It is important during the early stages of 50S assembly. This Aeromonas salmonicida (strain A449) protein is Large ribosomal subunit protein uL13.